The chain runs to 133 residues: uncharacterized protein (133 aa).

This is an uncharacterized protein from Mycobacterium tuberculosis (strain CDC 1551 / Oshkosh).